Reading from the N-terminus, the 354-residue chain is Anthranilate phosphoribosyltransferase (354 aa).

5-phospho-alpha-D-ribose 1-diphosphate contacts are provided by residues G94, 97-98 (GD), T102, 104-107 (NIST), 122-130 (KHGNRAASS), and S134. G94 contacts anthranilate. S106 contributes to the Mg(2+) binding site. N125 lines the anthranilate pocket. R180 contacts anthranilate. Residues D238 and E239 each coordinate Mg(2+).

The protein belongs to the anthranilate phosphoribosyltransferase family. Homodimer. It depends on Mg(2+) as a cofactor.

The enzyme catalyses N-(5-phospho-beta-D-ribosyl)anthranilate + diphosphate = 5-phospho-alpha-D-ribose 1-diphosphate + anthranilate. Its pathway is amino-acid biosynthesis; L-tryptophan biosynthesis; L-tryptophan from chorismate: step 2/5. Catalyzes the transfer of the phosphoribosyl group of 5-phosphorylribose-1-pyrophosphate (PRPP) to anthranilate to yield N-(5'-phosphoribosyl)-anthranilate (PRA). The sequence is that of Anthranilate phosphoribosyltransferase from Streptomyces griseus subsp. griseus (strain JCM 4626 / CBS 651.72 / NBRC 13350 / KCC S-0626 / ISP 5235).